We begin with the raw amino-acid sequence, 318 residues long: Malate dehydrogenase (318 aa).

NAD(+) contacts are provided by residues 11–17 (GAGGNVG) and Asp37. Residues Arg86 and Arg92 each coordinate substrate. Residues Asn99 and 122-124 (VTN) each bind NAD(+). The substrate site is built by Asn124 and Arg155. The active-site Proton acceptor is the His179.

This sequence belongs to the LDH/MDH superfamily. MDH type 3 family.

The catalysed reaction is (S)-malate + NAD(+) = oxaloacetate + NADH + H(+). Catalyzes the reversible oxidation of malate to oxaloacetate. This is Malate dehydrogenase from Nitratiruptor sp. (strain SB155-2).